The following is a 28-amino-acid chain: 50 kDa venom protease (28 aa).

It belongs to the venom metalloproteinase (M12B) family. Zn(2+) serves as cofactor. In terms of tissue distribution, expressed by the venom gland.

It localises to the secreted. The sequence is that of 50 kDa venom protease from Proatheris superciliaris (Lowland swamp viper).